A 765-amino-acid polypeptide reads, in one-letter code: Phosphoribosylformylglycinamidine synthase subunit PurL (765 aa).

Positions 1–13 (MTVSPTSAPTQAI) are enriched in polar residues. Residues 1–32 (MTVSPTSAPTQAIDTVERAATTPDEPQPFGEL) form a disordered region. Residue H65 is part of the active site. Positions 68 and 112 each coordinate ATP. A Mg(2+)-binding site is contributed by E114. Residues 115–118 (SHNH) and R137 contribute to the substrate site. H116 acts as the Proton acceptor in catalysis. D138 is a Mg(2+) binding site. Q263 is a binding site for substrate. Mg(2+) is bound at residue D291. Substrate is bound at residue 335 to 337 (ESQ). Residues N523 and G560 each contribute to the ATP site. N561 serves as a coordination point for Mg(2+). Position 563 (S563) interacts with substrate.

It belongs to the FGAMS family. Monomer. Part of the FGAM synthase complex composed of 1 PurL, 1 PurQ and 2 PurS subunits.

It is found in the cytoplasm. It catalyses the reaction N(2)-formyl-N(1)-(5-phospho-beta-D-ribosyl)glycinamide + L-glutamine + ATP + H2O = 2-formamido-N(1)-(5-O-phospho-beta-D-ribosyl)acetamidine + L-glutamate + ADP + phosphate + H(+). It participates in purine metabolism; IMP biosynthesis via de novo pathway; 5-amino-1-(5-phospho-D-ribosyl)imidazole from N(2)-formyl-N(1)-(5-phospho-D-ribosyl)glycinamide: step 1/2. Part of the phosphoribosylformylglycinamidine synthase complex involved in the purines biosynthetic pathway. Catalyzes the ATP-dependent conversion of formylglycinamide ribonucleotide (FGAR) and glutamine to yield formylglycinamidine ribonucleotide (FGAM) and glutamate. The FGAM synthase complex is composed of three subunits. PurQ produces an ammonia molecule by converting glutamine to glutamate. PurL transfers the ammonia molecule to FGAR to form FGAM in an ATP-dependent manner. PurS interacts with PurQ and PurL and is thought to assist in the transfer of the ammonia molecule from PurQ to PurL. The polypeptide is Phosphoribosylformylglycinamidine synthase subunit PurL (Mycobacterium avium (strain 104)).